Reading from the N-terminus, the 391-residue chain is Galactarate dehydratase (D-threo-forming) (391 aa).

R15 provides a ligand contact to substrate. D42 and H45 together coordinate Mg(2+). Y89 contributes to the substrate binding site. The active-site Proton donor is Y90. The Proton acceptor role is filled by Y164. Mg(2+) contacts are provided by D193, E221, and H246. T296 serves as a coordination point for substrate. Mg(2+) is bound at residue T297. R385 is a substrate binding site.

This sequence belongs to the mandelate racemase/muconate lactonizing enzyme family. The cofactor is Mg(2+).

It catalyses the reaction galactarate = (2S,3R)-dihydroxy-5-oxohexanedioate + H2O. In terms of biological role, catalyzes the regioselective dehydration of galactarate into 2-keto-D-threo-4,5-dihydroxyadipate ((2S,3R)-dihydroxy-5-oxohexanedioate). Is not active on other acid sugars. In Oceanobacillus iheyensis (strain DSM 14371 / CIP 107618 / JCM 11309 / KCTC 3954 / HTE831), this protein is Galactarate dehydratase (D-threo-forming).